A 378-amino-acid chain; its full sequence is tRNA N(3)-cytidine methyltransferase METTL2B (378 aa).

A2 bears the N-acetylalanine mark. S4 is subject to Phosphoserine. Residues W78 and Y82 each contribute to the S-adenosyl-L-methionine site. T154 carries the phosphothreonine modification. G188, D213, D239, L240, and I260 together coordinate S-adenosyl-L-methionine.

This sequence belongs to the methyltransferase superfamily. METL family. As to quaternary structure, monomer. Interacts with DALRD3.

Its subcellular location is the cytoplasm. It carries out the reaction cytidine(32) in tRNA(Thr) + S-adenosyl-L-methionine = N(3)-methylcytidine(32) in tRNA(Thr) + S-adenosyl-L-homocysteine + H(+). The enzyme catalyses cytidine(32) in tRNA(Arg)(CCU) + S-adenosyl-L-methionine = N(3)-methylcytidine(32) in tRNA(Arg)(CCU) + S-adenosyl-L-homocysteine + H(+). In terms of biological role, S-adenosyl-L-methionine-dependent methyltransferase that mediates N(3)-methylcytidine modification of residue 32 of the tRNA anticodon loop of tRNA(Thr)(UGU) and tRNA(Arg)(CCU). In Homo sapiens (Human), this protein is tRNA N(3)-cytidine methyltransferase METTL2B.